Consider the following 662-residue polypeptide: Serine/threonine-protein kinase PTK1/STK1 (662 aa).

Residues 35–119 (GNKLKKKASL…SSTSRNLSNS (85 aa)) are disordered. Residues 50 to 60 (STSTNDSESSS) are compositionally biased toward low complexity. Composition is skewed to polar residues over residues 61–91 (PKLP…SAST) and 98–119 (GSST…LSNS). Residues 196–503 (DDENKTIGWG…IDDLFEDPWF (308 aa)) enclose the Protein kinase domain. Residues 202–210 (IGWGGSCEV) and Lys226 contribute to the ATP site. Asp329 (proton acceptor) is an active-site residue. The interval 605 to 631 (TLTLSEEPPATPAPSAPSAPSARVRGH) is disordered.

It belongs to the protein kinase superfamily. Ser/Thr protein kinase family.

It carries out the reaction L-seryl-[protein] + ATP = O-phospho-L-seryl-[protein] + ADP + H(+). It catalyses the reaction L-threonyl-[protein] + ATP = O-phospho-L-threonyl-[protein] + ADP + H(+). Essential determinant for low-affinity spermidine transport. This chain is Serine/threonine-protein kinase PTK1/STK1 (PTK1), found in Saccharomyces cerevisiae (strain ATCC 204508 / S288c) (Baker's yeast).